The primary structure comprises 447 residues: Elongation factor 1-alpha (447 aa).

One can recognise a tr-type G domain in the interval 5 to 230 (KVHINIVVIG…DNINEPKRPS (226 aa)). The segment at 14–21 (GHVDSGKS) is G1. 14-21 (GHVDSGKS) serves as a coordination point for GTP. Residue Lys55 is modified to N6,N6-dimethyllysine. The segment at 70–74 (GITID) is G2. Lys79 is subject to N6,N6,N6-trimethyllysine. The segment at 91 to 94 (DAPG) is G3. GTP contacts are provided by residues 91–95 (DAPGH) and 153–156 (NKMD). Residues 153–156 (NKMD) form a G4 region. Residue Lys187 is modified to N6,N6,N6-trimethyllysine. Residues 194-196 (SGF) are G5. An N6-methyllysine modification is found at Lys261. Glu289 carries the post-translational modification 5-glutamyl glycerylphosphorylethanolamine. An N6,N6,N6-trimethyllysine modification is found at Lys306. Glu362 is modified (5-glutamyl glycerylphosphorylethanolamine). Lys396 carries the N6,N6,N6-trimethyllysine modification.

This sequence belongs to the TRAFAC class translation factor GTPase superfamily. Classic translation factor GTPase family. EF-Tu/EF-1A subfamily.

It localises to the cytoplasm. Its function is as follows. This protein promotes the GTP-dependent binding of aminoacyl-tRNA to the A-site of ribosomes during protein biosynthesis. The protein is Elongation factor 1-alpha of Pisum sativum (Garden pea).